The primary structure comprises 2121 residues: Non-reducing polyketide synthase aoiG (2121 aa).

Residues 5–258 form the Starter acyltransferase (SAT) domain; that stretch reads YIFGDQTVRV…LPVSIYAPYH (254 aa). The Ketosynthase family 3 (KS3) domain occupies 386–817; it reads SSKIAIIGFS…GGNTAVLVED (432 aa). Catalysis depends on for beta-ketoacyl synthase activity residues Cys-558, His-693, and His-735. One can recognise a Malonyl-CoA:ACP transacylase (MAT) domain in the interval 921–1239; that stretch reads FLFTGQGAQQ…LSVLHLAGVR (319 aa). An N-terminal hotdog fold region spans residues 1302-1433; it reads QKILEEEMTA…CTIELQRPHQ (132 aa). The region spanning 1302 to 1608 is the PKS/mFAS DH domain; the sequence is QKILEEEMTA…FQKVARRVLE (307 aa). His-1334 (proton acceptor; for dehydratase activity) is an active-site residue. Residues 1461–1608 are C-terminal hotdog fold; it reads THKMRRGVAY…FQKVARRVLE (148 aa). The active-site Proton donor; for dehydratase activity is the Asp-1519. Residues 1646 to 1723 enclose the Carrier 1 domain; that stretch reads PHVEDAWQQV…SLRIYLNMSS (78 aa). The residue at position 1683 (Ser-1683) is an O-(pantetheine 4'-phosphoryl)serine. Positions 1728–1752 are enriched in low complexity; it reads DSIETSSYPTPDESTTTTITSPSGS. Positions 1728–1760 are disordered; that stretch reads DSIETSSYPTPDESTTTTITSPSGSDRNVGRNS. A Carrier 2 domain is found at 1763–1840; the sequence is DGVGTTVGLV…AITAALHAIF (78 aa). An O-(pantetheine 4'-phosphoryl)serine modification is found at Ser-1800. The tract at residues 1872 to 1976 is TE/CLC (thioesterase/Claisen cyclase) domain; it reads TLFLFPDGSG…ILIDSPNPMG (105 aa).

Requires pantetheine 4'-phosphate as cofactor.

In terms of biological role, non-reducing polyketide synthase; part of the gene cluster that mediates the biosynthesis of a methylated derivative of known natural products orthosporin and diaporthin. AoiG catalyzes the biosynthesis of the hexaketide isocoumarin scaffold, via condensation of one acetyl-CoA starter unit with 6 malonyl-CoA units. An oxidoreductase that has still to be identified catalyzes the stereospecific reduction of the carbonyl moiety of the hexaketide isocoumarin scaffold to generate the S-configured secondary alcohol at C-11 of orthosporin. The methyltrasferase aoiF then catalyzes the biotransformation of not only orthosporin to diaporthin but also diaporthin to the final product, by performing a tandem methylation of the polyketide core. The chain is Non-reducing polyketide synthase aoiG from Aspergillus oryzae (strain ATCC 42149 / RIB 40) (Yellow koji mold).